The following is a 393-amino-acid chain: Endoplasmic reticulum junction formation protein lunapark-A (393 aa).

Over 1-45 (MGAVVSRWRAKPSTVEVLEGLDKDIQVLEEYREKNHKQLKLWVYR) the chain is Cytoplasmic. A helical membrane pass occupies residues 46 to 66 (LLLYSALLYLMACAVVYAWYI). Topologically, residues 67–69 (PER) are lumenal. The chain crosses the membrane as a helical span at residues 70 to 90 (MIGKLIVASPFLLFPLLIWLL). Residues 91-393 (RKLLIILYNK…EQDVSAMEVE (303 aa)) lie on the Cytoplasmic side of the membrane. Positions 95–130 (IILYNKRTERNNEKLEELKAEKKKILEQVMETETYK) form a coiled coil. The interval 146–209 (KLELETQPIG…PPEKGLSAST (64 aa)) is disordered. Residues 176–190 (TGRPPPVPVPGPSVP) show a composition bias toward pro residues. The C4-type; plays a role in ER morphology zinc finger occupies 269–294 (CQQCLSHNGMALKEEFEYIAFRCAYC). Residues 314–393 (AAEAKTSQDP…EQDVSAMEVE (80 aa)) are disordered. Composition is skewed to basic and acidic residues over residues 340-353 (ESKE…KAGD) and 364-383 (EEMK…KSDG).

Belongs to the lunapark family. Homodimer; homodimerization requires the C4-type zinc finger motif and decreases during mitosis in a phosphorylation-dependent manner. Post-translationally, phosphorylated. Phosphorylation occurs during interphase. Phosphorylation also occurs during mitosis; these phosphorylations reduce both its homodimerization and the ER three-way tubular junction formation.

The protein resides in the endoplasmic reticulum membrane. Functionally, endoplasmic reticulum (ER)-shaping membrane protein that plays a role in determining ER morphology. Involved in the stabilization of nascent three-way ER tubular junctions within the ER network. May also play a role as a curvature-stabilizing protein within three-way ER tubular junction network. The chain is Endoplasmic reticulum junction formation protein lunapark-A (lnpka) from Danio rerio (Zebrafish).